A 313-amino-acid chain; its full sequence is MKTELIRTISLYDTIILHRHVRPDPDAYGSQCGLTEILRETYPEKNIFAVGTPEPSLSFLYSLDEVDNETYEGALVIVCDTANQERIDDQRYPSGAKLMKIDHHPNEDPYGDLLWVDTSASSVSEMIYELYLEGKEHGWKLNTKAAELIYAGIVGDTGRFLFPNTTEKTLKYAGELIQYPFSSSELFNQLYETKLNVVKLNGFIFQNVSLSENGAASVFIKKDTLEKFGTTASEASQLVGTLGNISGIRAWVFFVEEDDQIRVRFRSKGPVINGLARKYNGGGHPLASGASIYSWDEADRILADLETLCKEHE.

This sequence belongs to the NrnA oligoribonuclease family. Tetramer. Requires Mn(2+) as cofactor.

It carries out the reaction adenosine 3',5'-bisphosphate + H2O = AMP + phosphate. Functionally, bifunctional enzyme which has both oligoribonuclease and pAp-phosphatase activities. Degrades RNA and DNA oligonucleotides with a length of 5 nucleotides and shorter, with a preference for 3-mers. Directionality is controversial; shown to degrade 5-mers and less in a 3' to 5' direction, and 11-mers in a 5' to 3' direction. Converts 3'(2')-phosphoadenosine 5'-phosphate (PAP) to AMP. The chain is Bifunctional oligoribonuclease and PAP phosphatase NrnA (nrnA) from Bacillus subtilis (strain 168).